A 155-amino-acid chain; its full sequence is MSQVILDLQLACEDNSGLPEESQFQTWLNAVIPQFQEESEVTIRVVDTAESHSLNLTYRGKDKPTNVLSFPFEVPPGMEMSLLGDLVICRQVVEKEAQEQGKPLEAHWAHMVVHGSLHLLGYDHIEDDEAEEMEALETEIMLALGYEDPYIAEKE.

The Zn(2+) site is built by H114, H118, and H124.

This sequence belongs to the endoribonuclease YbeY family. Zn(2+) is required as a cofactor.

Its subcellular location is the cytoplasm. Functionally, single strand-specific metallo-endoribonuclease involved in late-stage 70S ribosome quality control and in maturation of the 3' terminus of the 16S rRNA. This chain is Endoribonuclease YbeY, found in Shigella flexneri serotype 5b (strain 8401).